Reading from the N-terminus, the 186-residue chain is dTTP/UTP pyrophosphatase (186 aa).

Asp-70 functions as the Proton acceptor in the catalytic mechanism.

The protein belongs to the Maf family. YhdE subfamily. It depends on a divalent metal cation as a cofactor.

It localises to the cytoplasm. It catalyses the reaction dTTP + H2O = dTMP + diphosphate + H(+). The catalysed reaction is UTP + H2O = UMP + diphosphate + H(+). Its function is as follows. Nucleoside triphosphate pyrophosphatase that hydrolyzes dTTP and UTP. May have a dual role in cell division arrest and in preventing the incorporation of modified nucleotides into cellular nucleic acids. This chain is dTTP/UTP pyrophosphatase, found in Vibrio vulnificus (strain CMCP6).